Here is a 186-residue protein sequence, read N- to C-terminus: ATP synthase subunit delta (186 aa).

It belongs to the ATPase delta chain family. In terms of assembly, F-type ATPases have 2 components, F(1) - the catalytic core - and F(0) - the membrane proton channel. F(1) has five subunits: alpha(3), beta(3), gamma(1), delta(1), epsilon(1). CF(0) has four main subunits: a(1), b(1), b'(1) and c(10-14). The alpha and beta chains form an alternating ring which encloses part of the gamma chain. F(1) is attached to F(0) by a central stalk formed by the gamma and epsilon chains, while a peripheral stalk is formed by the delta, b and b' chains.

It localises to the cell inner membrane. Functionally, f(1)F(0) ATP synthase produces ATP from ADP in the presence of a proton or sodium gradient. F-type ATPases consist of two structural domains, F(1) containing the extramembraneous catalytic core and F(0) containing the membrane proton channel, linked together by a central stalk and a peripheral stalk. During catalysis, ATP synthesis in the catalytic domain of F(1) is coupled via a rotary mechanism of the central stalk subunits to proton translocation. In terms of biological role, this protein is part of the stalk that links CF(0) to CF(1). It either transmits conformational changes from CF(0) to CF(1) or is implicated in proton conduction. The chain is ATP synthase subunit delta from Rhodopseudomonas palustris (strain HaA2).